The sequence spans 275 residues: Voltage-dependent calcium channel gamma-7 subunit (275 aa).

4 consecutive transmembrane segments (helical) span residues 8–28 (ALTL…GIAV), 103–123 (FPMV…IGHI), 129–149 (ILAF…VVGL), and 179–199 (FAFA…SVYL). 3 positions are modified to phosphoserine: Ser222, Ser225, and Ser273.

It belongs to the PMP-22/EMP/MP20 family. CACNG subfamily. As to quaternary structure, interacts with CACNA1C. Identified in a complex with the L-type calcium channel subunits CACNA1C, CACNA2D1 and either CACNB1 or CACNB2. Acts as an auxiliary subunit for AMPA-selective glutamate receptors (AMPARs), such as GRIA1 and GRIA2. In terms of tissue distribution, detected in heart left ventricle. Widely expressed.

The protein resides in the cell membrane. Functionally, regulates the activity of L-type calcium channels that contain CACNA1C as pore-forming subunit. Regulates the trafficking and gating properties of AMPA-selective glutamate receptors (AMPARs). Promotes their targeting to the cell membrane and synapses and modulates their gating properties by slowing their rates of activation, deactivation and desensitization and by mediating their resensitization. Displays subunit-specific AMPA receptor regulation. Shows specificity only for GRIA1 and GRIA2. The sequence is that of Voltage-dependent calcium channel gamma-7 subunit (CACNG7) from Homo sapiens (Human).